We begin with the raw amino-acid sequence, 160 residues long: Large ribosomal subunit protein bL19 (160 aa).

Composition is skewed to basic and acidic residues over residues 1 to 15 and 28 to 39; these read MTED…KEES and ATRETKPKDSPS. The segment at 1–44 is disordered; that stretch reads MTEDLKNTSPSKEESNEIEESSKATPKATRETKPKDSPSKTKLS.

It belongs to the bacterial ribosomal protein bL19 family.

Its function is as follows. This protein is located at the 30S-50S ribosomal subunit interface and may play a role in the structure and function of the aminoacyl-tRNA binding site. The protein is Large ribosomal subunit protein bL19 of Prochlorococcus marinus (strain SARG / CCMP1375 / SS120).